A 153-amino-acid chain; its full sequence is ORM1-like protein 3 (153 aa).

Over 1–21 the chain is Cytoplasmic; it reads MNVGTAHSEVNPNTRVMNSRG. 2 helical membrane passes run 22-42 and 43-63; these read IWLS…SIPF and VSVP…MYIF. At 64–94 the chain is on the cytoplasmic side; that stretch reads LHTVKGTPFETPDQGKARLLTHWEQMDYGVQ. A helical transmembrane segment spans residues 95 to 117; the sequence is FTASRKFLTITPIILYFLTSFYT. Residues 118–121 are Extracellular-facing; that stretch reads KYDR. A helical transmembrane segment spans residues 122–142; that stretch reads VHFVINTISLLTVLIPKLPQF. Hydroxyproline is present on Pro-137. At 143 to 153 the chain is on the cytoplasmic side; it reads HGVRLFGINKY.

The protein belongs to the ORM family. Ceramide-sensitive subunit of the serine palmitoyltransferase (SPT) complex, which is also composed of SPTLC1, SPTLC2/3 and SPTSSA/B. When hydroxylated at Pro-137, ubiquitinated via 'Lys-48'-linkage, leading to proteasomal degradation. In endothelial cells, ORMDL3 proteasomal degradation is controlled by the sphingosine 1-phosphate receptor signaling pathway.

The protein localises to the endoplasmic reticulum membrane. Plays an essential role in the homeostatic regulation of sphingolipid de novo biosynthesis by modulating the activity of the serine palmitoyltransferase (SPT) in response to ceramide levels. When complexed to SPT, the binding of ceramides to its N-terminus stabilizes a conformation that block SPT substrate entry, hence preventing SPT catalytic activity. Through this mechanism, maintains ceramide levels at sufficient concentrations for the production of complex sphingolipids, but which prevents the accumulation of ceramides to levels that trigger apoptosis. This is ORM1-like protein 3 (ormdl3) from Danio rerio (Zebrafish).